Reading from the N-terminus, the 388-residue chain is Xylose isomerase (388 aa).

Catalysis depends on residues His-54 and Asp-57. Mg(2+) contacts are provided by Glu-181, Glu-217, His-220, Asp-245, Asp-255, Asp-257, and Asp-287.

Belongs to the xylose isomerase family. Homotetramer. Mg(2+) is required as a cofactor.

Its subcellular location is the cytoplasm. It carries out the reaction alpha-D-xylose = alpha-D-xylulofuranose. This is Xylose isomerase from Streptomyces avermitilis (strain ATCC 31267 / DSM 46492 / JCM 5070 / NBRC 14893 / NCIMB 12804 / NRRL 8165 / MA-4680).